We begin with the raw amino-acid sequence, 285 residues long: Mitochondrial substrate carrier family protein L (285 aa).

Residues 1–13 lie on the Mitochondrial intermembrane side of the membrane; the sequence is MIASKETKEKIRN. Solcar repeat units follow at residues 8-94, 103-185, and 193-282; these read KEKI…VKSK, ISLG…AQRY, and MTMG…VMKF. A helical membrane pass occupies residues 14–34; sequence FIGGFASGAASTLAGHPFDTL. At 35–69 the chain is on the mitochondrial matrix side; sequence KVRLQTEGSTGRFRGLAHCFTTTIKEEGFFALYKG. A helical transmembrane segment spans residues 70–90; it reads VTPPLLGMSIINSCMFGAMNI. Residues 91 to 102 lie on the Mitochondrial intermembrane side of the membrane; that stretch reads VKSKIHTDKSTP. The chain crosses the membrane as a helical span at residues 103–123; it reads ISLGEIMVSGAITGWIVSFVA. Residues 124–156 are Mitochondrial matrix-facing; the sequence is CPIETVKSKLQVQYTGVKLYNGPIDCIKKIGIR. The helical transmembrane segment at 157-177 threads the bilayer; it reads GLYKALIPTGFQRNSLYAYFG. The Mitochondrial intermembrane segment spans residues 178–198; the sequence is CYELAQRYLRREDGSMTMGRS. Residues 199-219 traverse the membrane as a helical segment; sequence FIAGGIAGTGFWLTNFPFDVI. Over 220-256 the chain is Mitochondrial matrix; sequence RSRIMTMPYNESPPRYKGMIDCAKHIYRVDGLKGFWK. Residues 257-277 form a helical membrane-spanning segment; the sequence is GFSPCLLRTFPANGATFVAYE. The Mitochondrial intermembrane portion of the chain corresponds to 278-285; it reads CVMKFFPM.

This sequence belongs to the mitochondrial carrier (TC 2.A.29) family.

It is found in the mitochondrion inner membrane. Its function is as follows. Mitochondrial solute carriers shuttle metabolites, nucleotides, and cofactors through the mitochondrial inner membrane. The polypeptide is Mitochondrial substrate carrier family protein L (mcfL) (Dictyostelium discoideum (Social amoeba)).